Consider the following 92-residue polypeptide: Small ribosomal subunit protein uS19c (92 aa).

Belongs to the universal ribosomal protein uS19 family.

It localises to the plastid. It is found in the chloroplast. Functionally, protein S19 forms a complex with S13 that binds strongly to the 16S ribosomal RNA. The chain is Small ribosomal subunit protein uS19c from Cicer arietinum (Chickpea).